The chain runs to 264 residues: ATP synthase subunit a (264 aa).

Helical transmembrane passes span 29–49 (TWHI…LWIF), 87–107 (NALI…MNFM), 134–154 (DVNI…YYSI), 177–197 (IPVN…SLAL), 208–228 (LIFI…SLGV), and 235–255 (LIFH…LTIV).

It belongs to the ATPase A chain family. As to quaternary structure, F-type ATPases have 2 components, CF(1) - the catalytic core - and CF(0) - the membrane proton channel. CF(1) has five subunits: alpha(3), beta(3), gamma(1), delta(1), epsilon(1). CF(0) has three main subunits: a(1), b(2) and c(9-12). The alpha and beta chains form an alternating ring which encloses part of the gamma chain. CF(1) is attached to CF(0) by a central stalk formed by the gamma and epsilon chains, while a peripheral stalk is formed by the delta and b chains.

Its subcellular location is the cell inner membrane. Its function is as follows. Key component of the proton channel; it plays a direct role in the translocation of protons across the membrane. The chain is ATP synthase subunit a from Shewanella sp. (strain ANA-3).